A 295-amino-acid polypeptide reads, in one-letter code: MTATRLDGNAVAADVRSAVAAAVSALPGQPCLAVVLVGEDPASEVYVRNKVKMTEAAGMVSIHHRLPADTGQAEVERLIESLNADPEVDGILLQLPLPKGLDADAAIEKINPDKDVDGLTEVSAGRLSLGKPGLRPCTPVGSVILAKRALGPDLSGKNVVVIGRSILVGKPAALLFLAENCTVTIAHSKTADLANVCRSADILVPAVGRPEMVRGDWVKPGAAVIDVGINRIPAPEKGEGKTRLVGDAHYESCAEVAGFITPVPGGVGPMTIACLLRNTVLAACARRGWTVPEGL.

NADP(+) contacts are provided by residues 163–165 (GRS), S188, and I229.

The protein belongs to the tetrahydrofolate dehydrogenase/cyclohydrolase family. In terms of assembly, homodimer.

The catalysed reaction is (6R)-5,10-methylene-5,6,7,8-tetrahydrofolate + NADP(+) = (6R)-5,10-methenyltetrahydrofolate + NADPH. It catalyses the reaction (6R)-5,10-methenyltetrahydrofolate + H2O = (6R)-10-formyltetrahydrofolate + H(+). Its pathway is one-carbon metabolism; tetrahydrofolate interconversion. Catalyzes the oxidation of 5,10-methylenetetrahydrofolate to 5,10-methenyltetrahydrofolate and then the hydrolysis of 5,10-methenyltetrahydrofolate to 10-formyltetrahydrofolate. This is Bifunctional protein FolD from Hyphomonas neptunium (strain ATCC 15444).